A 1012-amino-acid polypeptide reads, in one-letter code: Multiple C2 domain and transmembrane region protein 10 (1012 aa).

Residues 1–115 (MTEAKTGTGN…REGESVVQLY (115 aa)) enclose the C2 1 domain. The disordered stretch occupies residues 141–203 (ENGENVRRVN…SQQNGQGQRM (63 aa)). A compositionally biased stretch (basic residues) spans 148-160 (RVNRSGGSKKSKK). Composition is skewed to low complexity over residues 161–180 (VQNV…QQQQ) and 188–202 (RGNQ…QGQR). C2 domains follow at residues 262–376 (SSHK…PQWY), 411–551 (KAGN…SRWF), and 585–710 (YNSD…THSY). Ca(2+)-binding residues include glutamate 296, glutamate 344, asparagine 346, and glutamate 349. Helical transmembrane passes span 810–830 (FFRL…VEVM), 841–861 (VFVL…PCLL), and 952–972 (ATFL…TVPV).

It belongs to the MCTP family. The cofactor is Ca(2+). In terms of tissue distribution, highly expressed in roots meristems, shoot apical meristems (SAMs) and in incipient leaf primordia. Observed in flowers.

The protein resides in the endoplasmic reticulum membrane. Functionally, may function as a signaling molecule by regulating the trafficking of other regulators. The chain is Multiple C2 domain and transmembrane region protein 10 from Arabidopsis thaliana (Mouse-ear cress).